Consider the following 458-residue polypeptide: MHDKTWSGRFNEPVSELVKQYTASIGFDRRLAEWDIQGSLAHAQMLKETGVLDEGDLADIRRGMAEILEEIRSGKIEWSSDLEDVHMNIERRLTDKIGDAGKRLHTGRSRNDQVATDIRLWLRDQITVIQSLIQSLQTALLDLAEQNAETVMPGFTHLQVAQPVSFGHHMLAYVEMLGRDNERMADCRCRVNRMPLGAAALAGTTYPIQREITAELLGFEQICQNSLDAVSDRDFAIEFTAAASLVMVHLSRLSEELILWMSPRFGFIDIADRFCTGSSIMPQKKNPDVPELVRGKSGRVIGHLIGLITLMKSQPLAYNKDNQEDKEPLFDTADTLIDTLRIYADMMRGVTVKPDNMRAAVMQGFATATDLADYLVKKGMPFRDAHEVVAQAVRHADQAGVDLSELPLEVLQGFSDLIADDVYGVLTPEGSLNARNHLGGTAPEQVRFQVKRWREMLA.

It belongs to the lyase 1 family. Argininosuccinate lyase subfamily.

The protein resides in the cytoplasm. The catalysed reaction is 2-(N(omega)-L-arginino)succinate = fumarate + L-arginine. It functions in the pathway amino-acid biosynthesis; L-arginine biosynthesis; L-arginine from L-ornithine and carbamoyl phosphate: step 3/3. This is Argininosuccinate lyase from Neisseria meningitidis serogroup C (strain 053442).